A 676-amino-acid polypeptide reads, in one-letter code: Electrogenic aspartate/glutamate antiporter SLC25A13, mitochondrial (676 aa).

N-acetylalanine is present on alanine 2. The interval 2–295 is regulatory N-terminal domain; that stretch reads AAAKVALTKR…TLADIERIAP (294 aa). The Mitochondrial intermembrane segment spans residues 2–332; the sequence is AAAKVALTKR…LLQLAESAYR (331 aa). EF-hand domains lie at 51–86, 87–122, 125–157, and 158–193; these read SQPN…SVLC, APDA…TTIH, IPFN…FLLE, and IQLE…IRPH. Ca(2+) contacts are provided by aspartate 66, threonine 68, aspartate 70, leucine 72, and glutamate 77. A linker loop domain region spans residues 296–312; it reads LEEGMLPFNLAEAQRQQ. Residues 322–613 are carrier domain; the sequence is FLLQLAESAY…LQRWFYVDFG (292 aa). Solcar repeat units lie at residues 327-419, 427-511, and 519-607; these read AESA…VRDK, VPLL…VKAS, and VSPG…LQRW. A helical membrane pass occupies residues 333–350; that stretch reads FGLGSIAGAVGATAVYPI. Residues 351–393 lie on the Mitochondrial matrix side of the membrane; it reads DLVKTRMQNQRSTGSFVGELMYKNSFDCFKKVLRYEGFFGLYR. An N6-acetyllysine mark is found at lysine 354 and lysine 373. A helical membrane pass occupies residues 394-413; that stretch reads GLLPQLLGVAPEKAIKLTVN. The Mitochondrial intermembrane portion of the chain corresponds to 414–436; it reads DFVRDKFMHKDGSVPLLAEIFAG. Residues 437–450 traverse the membrane as a helical segment; that stretch reads GCAGGSQVIFTNPL. Over 451–485 the chain is Mitochondrial matrix; sequence EIVKIRLQVAGEITTGPRVSALSVVRDLGFFGIYK. Lysine 454 carries the N6-methyllysine modification. Lysine 485 is subject to N6-acetyllysine; alternate. At lysine 485 the chain carries N6-succinyllysine; alternate. A helical membrane pass occupies residues 486-505; the sequence is GAKACFLRDIPFSAIYFPCY. Residues 506-524 lie on the Mitochondrial intermembrane side of the membrane; it reads AHVKASFANEDGQVSPGSL. The chain crosses the membrane as a helical span at residues 525 to 542; that stretch reads LLAGAIAGMPAASLVTPA. The Mitochondrial matrix segment spans residues 543 to 581; sequence DVIKTRLQVAARAGQTTYSGVTDCFRKILREEGPKALWK. Residue lysine 581 is modified to N6-succinyllysine. A helical membrane pass occupies residues 582–601; it reads GAGARVFRSSPQFGVTLLTY. The Mitochondrial intermembrane portion of the chain corresponds to 602–676; it reads ELLQRWFYVD…STSKVTAVGS (75 aa). Residues 614 to 676 are C-terminal domain; it reads GVKPVGSELV…STSKVTAVGS (63 aa). Lysine 663 carries the post-translational modification N6-acetyllysine. Serine 667 is subject to Phosphoserine.

The protein belongs to the mitochondrial carrier (TC 2.A.29) family. In terms of assembly, homodimer (via N-terminus).

It is found in the mitochondrion inner membrane. The enzyme catalyses L-aspartate(in) + L-glutamate(out) + H(+)(out) = L-aspartate(out) + L-glutamate(in) + H(+)(in). The catalysed reaction is 3-sulfino-L-alanine(out) + L-glutamate(in) + H(+)(in) = 3-sulfino-L-alanine(in) + L-glutamate(out) + H(+)(out). It catalyses the reaction 3-sulfino-L-alanine(out) + L-aspartate(in) = 3-sulfino-L-alanine(in) + L-aspartate(out). L-aspartate and 3-sulfino-L-alanine uptake are both inhibited by glisoxepide. In terms of biological role, mitochondrial electrogenic aspartate/glutamate antiporter that favors efflux of aspartate and entry of glutamate and proton within the mitochondria as part of the malate-aspartate shuttle. Also mediates the uptake of L-cysteinesulfinate (3-sulfino-L-alanine) by mitochondria in exchange of L-glutamate and proton. Can also exchange L-cysteinesulfinate with aspartate in their anionic form without any proton translocation. Lacks transport activity towards gamma-aminobutyric acid (GABA). The chain is Electrogenic aspartate/glutamate antiporter SLC25A13, mitochondrial from Rattus norvegicus (Rat).